Consider the following 186-residue polypeptide: ATP-dependent protease subunit HslV (186 aa).

Residue threonine 14 is part of the active site. Na(+) contacts are provided by alanine 168, cysteine 171, and threonine 174.

Belongs to the peptidase T1B family. HslV subfamily. A double ring-shaped homohexamer of HslV is capped on each side by a ring-shaped HslU homohexamer. The assembly of the HslU/HslV complex is dependent on binding of ATP.

The protein localises to the cytoplasm. It catalyses the reaction ATP-dependent cleavage of peptide bonds with broad specificity.. With respect to regulation, allosterically activated by HslU binding. Protease subunit of a proteasome-like degradation complex believed to be a general protein degrading machinery. This chain is ATP-dependent protease subunit HslV, found in Bradyrhizobium sp. (strain ORS 278).